A 371-amino-acid chain; its full sequence is Flagellar P-ring protein 1 (371 aa).

The first 19 residues, 1–19 (MRRALLLAALLACAPPAFA), serve as a signal peptide directing secretion.

Belongs to the FlgI family. As to quaternary structure, the basal body constitutes a major portion of the flagellar organelle and consists of four rings (L,P,S, and M) mounted on a central rod.

Its subcellular location is the periplasm. The protein resides in the bacterial flagellum basal body. Its function is as follows. Assembles around the rod to form the L-ring and probably protects the motor/basal body from shearing forces during rotation. This Cereibacter sphaeroides (strain ATCC 17023 / DSM 158 / JCM 6121 / CCUG 31486 / LMG 2827 / NBRC 12203 / NCIMB 8253 / ATH 2.4.1.) (Rhodobacter sphaeroides) protein is Flagellar P-ring protein 1.